The sequence spans 304 residues: Probable HTH-type transcriptional regulator LgoR (304 aa).

Residues 1–70 (MSRSQNLRHN…VGNDYVIARK (70 aa)) form the HTH gntR-type domain. The segment at residues 31 to 50 (QSALAEMYNISRTTVRHILS) is a DNA-binding region (H-T-H motif).

In terms of biological role, may be a positive transcriptional regulator for lgoD and/or lgoT. Is essential for growth on L-galactonate as the sole carbon source. The sequence is that of Probable HTH-type transcriptional regulator LgoR (lgoR) from Escherichia coli (strain K12).